A 499-amino-acid polypeptide reads, in one-letter code: Fumarate hydratase 2 (499 aa).

Residues 19 to 51 (ADVTLKQEDEQQERRSYSTPFREERDTFGPIQV) form a disordered region. Positions 23 to 45 (LKQEDEQQERRSYSTPFREERDT) are enriched in basic and acidic residues. Substrate contacts are provided by residues 134 to 136 (SGT), 164 to 167 (HPND), 174 to 176 (SSN), and threonine 222. Residue histidine 223 is the Proton donor/acceptor of the active site. Residue serine 353 is part of the active site. Residues serine 354 and 359-361 (KVN) each bind substrate.

It belongs to the class-II fumarase/aspartase family. Fumarase subfamily. As to quaternary structure, homotetramer.

The protein resides in the cytoplasm. Its subcellular location is the cytosol. The catalysed reaction is (S)-malate = fumarate + H2O. Fumarate hydratase activity (fumarate to L-malate) is strongly inhibited by phosphoenolpyruvate, citrate, oxaloacetate, ATP and ADP. Malate dehydratase activity (malate to fumarate) is activated by oxaloacetate, Asn and Gln. Malate dehydratase activity (malate to fumarate) is inhibited by citrate, succinate, ADP and ATP. In terms of biological role, cytosolic fumarate hydratase that catalyzes the reversible stereospecific interconversion of fumarate to L-malate. Catalyzes the dehydration of L-malate to fumarate in the cytosol: required for the massive fumarate accumulation during the day in plants grown under high nitrogen. Also required for acclimation of photosynthesis to cold: acts by mediating accumulation of fumarate at low temperature, leading to reduce accumulation of phosphorylated sugars. The polypeptide is Fumarate hydratase 2 (Arabidopsis thaliana (Mouse-ear cress)).